The following is a 506-amino-acid chain: Probable alpha-L-arabinofuranosidase B (506 aa).

The signal sequence occupies residues 1 to 26; sequence MSSGLSLERACAVALGIVASASLVAA. A catalytic region spans residues 27–343; that stretch reads GPCDIYSSGG…ADIVAAKYAI (317 aa). Cystine bridges form between Cys-29–Cys-39, Cys-89–Cys-94, and Cys-184–Cys-185. Asn-91 is a glycosylation site (N-linked (GlcNAc...) asparagine). Asp-227 serves as a coordination point for substrate. The active-site Nucleophile is the Glu-229. Substrate-binding residues include Asn-230 and Gly-304. Catalysis depends on Asp-305, which acts as the Proton donor. The tract at residues 344 to 506 is ABD; the sequence is ASLTSGPALT…VSWVVSTGFA (163 aa). Cysteines 409 and 447 form a disulfide. His-424, Asn-426, Phe-427, Asp-443, His-471, Glu-473, Leu-476, and Asp-496 together coordinate substrate.

It belongs to the glycosyl hydrolase 54 family.

It is found in the secreted. The catalysed reaction is Hydrolysis of terminal non-reducing alpha-L-arabinofuranoside residues in alpha-L-arabinosides.. The protein operates within glycan metabolism; L-arabinan degradation. Alpha-L-arabinofuranosidase involved in the degradation of arabinoxylan, a major component of plant hemicellulose. Able to hydrolyze 1,5-, 1,3- and 1,2-alpha-linkages not only in L-arabinofuranosyl oligosaccharides, but also in polysaccharides containing terminal non-reducing L-arabinofuranoses in side chains, like L-arabinan, arabinogalactan and arabinoxylan. This chain is Probable alpha-L-arabinofuranosidase B (abfB), found in Aspergillus flavus (strain ATCC 200026 / FGSC A1120 / IAM 13836 / NRRL 3357 / JCM 12722 / SRRC 167).